We begin with the raw amino-acid sequence, 243 residues long: Pyridoxine 5'-phosphate synthase (243 aa).

Asn9 serves as a coordination point for 3-amino-2-oxopropyl phosphate. 11-12 (DH) is a 1-deoxy-D-xylulose 5-phosphate binding site. Arg20 is a 3-amino-2-oxopropyl phosphate binding site. The active-site Proton acceptor is His45. Positions 47 and 52 each coordinate 1-deoxy-D-xylulose 5-phosphate. Glu72 acts as the Proton acceptor in catalysis. Thr102 contributes to the 1-deoxy-D-xylulose 5-phosphate binding site. The active-site Proton donor is the His193. Residues Gly194 and 215 to 216 (GH) each bind 3-amino-2-oxopropyl phosphate.

This sequence belongs to the PNP synthase family. Homooctamer; tetramer of dimers.

It localises to the cytoplasm. It catalyses the reaction 3-amino-2-oxopropyl phosphate + 1-deoxy-D-xylulose 5-phosphate = pyridoxine 5'-phosphate + phosphate + 2 H2O + H(+). Its pathway is cofactor biosynthesis; pyridoxine 5'-phosphate biosynthesis; pyridoxine 5'-phosphate from D-erythrose 4-phosphate: step 5/5. Catalyzes the complicated ring closure reaction between the two acyclic compounds 1-deoxy-D-xylulose-5-phosphate (DXP) and 3-amino-2-oxopropyl phosphate (1-amino-acetone-3-phosphate or AAP) to form pyridoxine 5'-phosphate (PNP) and inorganic phosphate. The chain is Pyridoxine 5'-phosphate synthase from Photorhabdus laumondii subsp. laumondii (strain DSM 15139 / CIP 105565 / TT01) (Photorhabdus luminescens subsp. laumondii).